Reading from the N-terminus, the 317-residue chain is L-lactate dehydrogenase 1 (317 aa).

Residues V17, D38, K43, Y69, and 83–84 each bind NAD(+); that span reads GA. Positions 86 and 92 each coordinate substrate. Residues S105, 122-124, and S147 contribute to the NAD(+) site; that span reads ATN. 124–127 is a binding site for substrate; it reads NPVD. 152–155 is a binding site for substrate; the sequence is DSAR. Residue H179 is the Proton acceptor of the active site. A Phosphotyrosine modification is found at Y223. Residue T232 coordinates substrate.

It belongs to the LDH/MDH superfamily. LDH family. As to quaternary structure, homotetramer.

It localises to the cytoplasm. It catalyses the reaction (S)-lactate + NAD(+) = pyruvate + NADH + H(+). Its pathway is fermentation; pyruvate fermentation to lactate; (S)-lactate from pyruvate: step 1/1. Functionally, catalyzes the conversion of lactate to pyruvate (Potential). Appears to be the primary factor that allows S.aureus growth during nitrosative stress in both aerobically and anaerobically cultured cells. In Staphylococcus aureus (strain bovine RF122 / ET3-1), this protein is L-lactate dehydrogenase 1.